Here is a 1007-residue protein sequence, read N- to C-terminus: Serine/threonine-protein kinase PRP4 homolog (1007 aa).

A disordered region spans residues 1 to 102 (MAATEPPSLR…LSPAKRTKLD (102 aa)). Ala2 carries the N-acetylalanine modification. Residues Ser8, Ser21, Ser24, and Ser33 each carry the phosphoserine modification. Composition is skewed to basic residues over residues 40–60 (KHSR…KHKH) and 68–82 (KKHK…HKRK). Basic and acidic residues predominate over residues 83-92 (EVIEASDKEG). Phosphoserine is present on residues Ser88 and Ser94. Residue Lys100 is modified to N6-acetyllysine; alternate. Lys100 participates in a covalent cross-link: Glycyl lysine isopeptide (Lys-Gly) (interchain with G-Cter in SUMO2); alternate. Lys112 is covalently cross-linked (Glycyl lysine isopeptide (Lys-Gly) (interchain with G-Cter in SUMO2)). Residue Lys118 forms a Glycyl lysine isopeptide (Lys-Gly) (interchain with G-Cter in SUMO2); alternate linkage. Lys118 is covalently cross-linked (Glycyl lysine isopeptide (Lys-Gly) (interchain with G-Cter in SUMO1); alternate). At Ser132 the chain carries Phosphoserine. Position 141 is a phosphotyrosine (Tyr141). 2 disordered regions span residues 141–535 (YESG…EDEE) and 560–583 (NISV…SPDD). A phosphoserine mark is found at Ser143, Ser145, and Ser167. Over residues 158–169 (GNRSSTRSSSTR) the composition is skewed to low complexity. Glycyl lysine isopeptide (Lys-Gly) (interchain with G-Cter in SUMO2) cross-links involve residues Lys171 and Lys178. Basic residues-rich tracts occupy residues 180–203 (SAKK…RKSK) and 215–231 (RSKS…SKRS). 6 positions are modified to phosphoserine: Ser240, Ser242, Ser258, Ser278, Ser292, and Ser294. Over residues 248–271 (RSQEKVGKARSPAEEKMKSEEKGK) the composition is skewed to basic and acidic residues. Positions 294–303 (SPVDLRDKSK) are enriched in basic and acidic residues. A compositionally biased stretch (basic residues) spans 304–315 (DRRSRSKERKSK). Residues 316 to 325 (RSEIDKEKKP) are compositionally biased toward basic and acidic residues. A phosphoserine mark is found at Ser328, Ser354, Ser356, Ser366, and Ser368. The span at 342 to 367 (PSRRPGRSPKRRSLSPKLRDKSRRSR) shows a compositional bias: basic residues. Thr385 is subject to Phosphothreonine. Ser387 carries the phosphoserine modification. Basic and acidic residues-rich tracts occupy residues 395–408 (RSLE…ERRR) and 415–429 (RPRD…RSKD). Residues Ser427, Ser431, and Ser437 each carry the phosphoserine modification. Over residues 438 to 497 (PTRRRSRSPIRRRSRSPLRRSRSPRRRSRSPRRRDRSRRSRSRLRRRSRSRGGHRRRSRS) the composition is skewed to basic residues. Ser518, Ser519, Ser520, Ser565, Ser569, Ser576, Ser578, and Ser580 each carry phosphoserine. Residues 518–535 (SSSDDNLEDFDVEEEDEE) show a composition bias toward acidic residues. The span at 562–581 (SVPSEPSSPQSSTRSRSPSP) shows a compositional bias: low complexity. Residues Lys593 and Lys659 each participate in a glycyl lysine isopeptide (Lys-Gly) (interchain with G-Cter in SUMO2) cross-link. One can recognise a Protein kinase domain in the interval 687–1006 (YNVYGYTGQG…ALQHAFIQEK (320 aa)). ATP-binding positions include 693–701 (TGQGVFSNV) and Lys717. Residue Lys717 is modified to N6-acetyllysine. Asp815 acts as the Proton acceptor in catalysis. Residue Tyr849 is modified to Phosphotyrosine. Ser852 is modified (phosphoserine).

This sequence belongs to the protein kinase superfamily. CMGC Ser/Thr protein kinase family. Interacts with CLK1 C-terminus. Associates with the U5 snRNP and NCOR1 deacetylase complexes. Identified in the spliceosome C complex. Post-translationally, phosphorylated by CLK1. Autophosphorylated; phosphorylation inhibits interaction with its targets, such as PRPF6 or SMARCA4.

It localises to the nucleus. The protein resides in the chromosome. It is found in the centromere. The protein localises to the kinetochore. The catalysed reaction is L-seryl-[protein] + ATP = O-phospho-L-seryl-[protein] + ADP + H(+). It carries out the reaction L-threonyl-[protein] + ATP = O-phospho-L-threonyl-[protein] + ADP + H(+). Its function is as follows. Serine/threonine kinase involved in spliceosomal assembly as well as mitosis and signaling regulation. Connects chromatin mediated regulation of transcription and pre-mRNA splicing. During spliceosomal assembly, interacts with and phosphorylates PRPF6 and PRPF31, components of the U4/U6-U5 tri-small nuclear ribonucleoprotein (snRNP), to facilitate the formation of the spliceosome B complex. Plays a role in regulating transcription and the spindle assembly checkpoint (SAC). Associates with U5 snRNP and NCOR1 deacetylase complexes which may allow a coordination of pre-mRNA splicing with chromatin remodeling events involved in transcriptional regulation. Associates and probably phosphorylates SMARCA4 and NCOR1. Phosphorylates SRSF1. Associates with kinetochores during mitosis and is necessary for recruitment and maintenance of the checkpoint proteins such as MAD1L1 and MAD12L1 at the kinetochores. Phosphorylates and regulates the activity of the transcription factors such as ELK1 and KLF13. Phosphorylates nuclear YAP1 and WWTR1/TAZ which induces nuclear exclusion and regulates Hippo signaling pathway, involved in tissue growth control. The polypeptide is Serine/threonine-protein kinase PRP4 homolog (Prp4k) (Mus musculus (Mouse)).